We begin with the raw amino-acid sequence, 389 residues long: Transaldolase (389 aa).

The active-site Schiff-base intermediate with substrate is Lys-136. EF-hand domains are found at residues 330–365 (ALNQ…FDAI) and 365–388 (IDLN…VSKL). Ca(2+)-binding residues include Asp-343, Asp-345, Asp-347, Glu-354, Asp-366, Asn-368, Asp-370, Lys-372, and Glu-377.

This sequence belongs to the transaldolase family. Type 1 subfamily.

It localises to the cytoplasm. The catalysed reaction is D-sedoheptulose 7-phosphate + D-glyceraldehyde 3-phosphate = D-erythrose 4-phosphate + beta-D-fructose 6-phosphate. The protein operates within carbohydrate degradation; pentose phosphate pathway; D-glyceraldehyde 3-phosphate and beta-D-fructose 6-phosphate from D-ribose 5-phosphate and D-xylulose 5-phosphate (non-oxidative stage): step 2/3. Its function is as follows. Transaldolase is important for the balance of metabolites in the pentose-phosphate pathway. This chain is Transaldolase, found in Gloeobacter violaceus (strain ATCC 29082 / PCC 7421).